The following is a 125-amino-acid chain: Succinate dehydrogenase assembly factor 3, mitochondrial (125 aa).

Residues 1–30 (MPGKHVSRVRALYRRILLLHRALPPDLKAL) constitute a mitochondrion transit peptide.

Belongs to the complex I LYR family. SDHAF3 subfamily. Interacts with Sdhb within an Sdha-Sdhb subcomplex.

Its subcellular location is the mitochondrion matrix. Its function is as follows. Plays an essential role in the assembly of succinate dehydrogenase (SDH), an enzyme complex (also referred to as respiratory complex II) that is a component of both the tricarboxylic acid (TCA) cycle and the mitochondrial electron transport chain, and which couples the oxidation of succinate to fumarate with the reduction of ubiquinone (coenzyme Q) to ubiquinol. Promotes maturation of the iron-sulfur protein subunit Sdhb of the SDH catalytic dimer, protecting it from the deleterious effects of oxidants. May act together with SDHAF1. The sequence is that of Succinate dehydrogenase assembly factor 3, mitochondrial from Mus musculus (Mouse).